A 167-amino-acid polypeptide reads, in one-letter code: 16S rRNA aminocarboxypropyltransferase (167 aa).

The S-adenosyl-L-methionine site is built by Thr-17, Val-62, Leu-84, Tyr-99, and Ser-103.

The protein belongs to the TDD superfamily. TSR3 family.

The protein resides in the cytoplasm. It carries out the reaction an N(1)-methylpseudouridine in rRNA + S-adenosyl-L-methionine = N(1)-methyl-N(3)-[(3S)-3-amino-3-carboxypropyl]pseudouridine in rRNA + S-methyl-5'-thioadenosine + H(+). Its function is as follows. Aminocarboxypropyltransferase that catalyzes the aminocarboxypropyl transfer on pseudouridine corresponding to position 914 in M.jannaschii 16S rRNA. It constitutes the last step in biosynthesis of the hypermodified N1-methyl-N3-(3-amino-3-carboxypropyl) pseudouridine (m1acp3-Psi). This is 16S rRNA aminocarboxypropyltransferase from Sulfurisphaera tokodaii (strain DSM 16993 / JCM 10545 / NBRC 100140 / 7) (Sulfolobus tokodaii).